We begin with the raw amino-acid sequence, 149 residues long: Large ribosomal subunit protein bL9 (149 aa).

The protein belongs to the bacterial ribosomal protein bL9 family.

Binds to the 23S rRNA. The sequence is that of Large ribosomal subunit protein bL9 from Thermotoga sp. (strain RQ2).